A 160-amino-acid chain; its full sequence is 3-hydroxyacyl-[acyl-carrier-protein] dehydratase FabZ (160 aa).

The active site involves His58.

Belongs to the thioester dehydratase family. FabZ subfamily.

Its subcellular location is the cytoplasm. The catalysed reaction is a (3R)-hydroxyacyl-[ACP] = a (2E)-enoyl-[ACP] + H2O. In terms of biological role, involved in unsaturated fatty acids biosynthesis. Catalyzes the dehydration of short chain beta-hydroxyacyl-ACPs and long chain saturated and unsaturated beta-hydroxyacyl-ACPs. This chain is 3-hydroxyacyl-[acyl-carrier-protein] dehydratase FabZ, found in Ruegeria sp. (strain TM1040) (Silicibacter sp.).